A 130-amino-acid chain; its full sequence is Small ribosomal subunit protein uS11c (130 aa).

It belongs to the universal ribosomal protein uS11 family. In terms of assembly, part of the 30S ribosomal subunit.

It is found in the plastid. The protein resides in the chloroplast. This Oedogonium cardiacum (Filamentous green alga) protein is Small ribosomal subunit protein uS11c.